A 105-amino-acid chain; its full sequence is uncharacterized protein (105 aa).

3 helical membrane passes run 3–23 (ISPL…QALF), 41–61 (DLVN…ALVS), and 63–83 (AFPV…TFIY).

The protein resides in the cell membrane. This is an uncharacterized protein from Methanocaldococcus jannaschii (strain ATCC 43067 / DSM 2661 / JAL-1 / JCM 10045 / NBRC 100440) (Methanococcus jannaschii).